The sequence spans 432 residues: Septin-14 (432 aa).

The Septin-type G domain occupies 49–315; the sequence is QGFTFNILCV…ECYRYQKLQK (267 aa). Residues 59-66 are G1 motif; sequence GETGIGKS. GTP-binding positions include 59–66, G114, 195–203, G249, and R264; these read GETGIGKS and KADTISKND. The tract at residues 111–114 is G3 motif; sequence ETVG. Positions 194-197 are G4 motif; that stretch reads AKAD. Residues 332-412 are a coiled coil; the sequence is EIFEAKRQEF…IIDFYKMKAA (81 aa). The segment at 369 to 432 is required for interaction with SEPTIN4. Required for migration of cortical neurons during corticogenesis; that stretch reads EAEKELQDKF…DTKKDKHRKK (64 aa).

It belongs to the TRAFAC class TrmE-Era-EngA-EngB-Septin-like GTPase superfamily. Septin GTPase family. Septins polymerize into heterooligomeric protein complexes that form filaments, and can associate with cellular membranes, actin filaments and microtubules. GTPase activity is required for filament formation. Interacts with ACTN4. Interacts with SEPTIN9. Interacts (via C-terminus) with SEPTIN4. Testis-specific (at protein level).

It localises to the cytoplasm. Its subcellular location is the cytoskeleton. It is found in the cell projection. The protein resides in the axon. The protein localises to the dendrite. It localises to the perikaryon. Its subcellular location is the perinuclear region. It is found in the cytoplasmic vesicle. The protein resides in the secretory vesicle. The protein localises to the acrosome. Functionally, filament-forming cytoskeletal GTPase. Involved in the migration of cortical neurons and the formation of neuron leading processes during embryonic development. Plays a role in sperm head formation during spermiogenesis, potentially via facilitating localization of ACTN4 to cell filaments. The chain is Septin-14 from Homo sapiens (Human).